Here is an 868-residue protein sequence, read N- to C-terminus: Leucine--tRNA ligase (868 aa).

The 'HIGH' region motif lies at 42–52 (PYPSGKLHMGH). Positions 627-631 (KMAKS) match the 'KMSKS' region motif. Lys630 lines the ATP pocket.

This sequence belongs to the class-I aminoacyl-tRNA synthetase family.

It is found in the cytoplasm. It carries out the reaction tRNA(Leu) + L-leucine + ATP = L-leucyl-tRNA(Leu) + AMP + diphosphate. The polypeptide is Leucine--tRNA ligase (Pseudomonas fluorescens (strain Pf0-1)).